A 293-amino-acid chain; its full sequence is Ribosomal protein L11 methyltransferase (293 aa).

S-adenosyl-L-methionine-binding residues include Thr145, Gly166, Asp188, and Asn230.

It belongs to the methyltransferase superfamily. PrmA family.

The protein localises to the cytoplasm. It catalyses the reaction L-lysyl-[protein] + 3 S-adenosyl-L-methionine = N(6),N(6),N(6)-trimethyl-L-lysyl-[protein] + 3 S-adenosyl-L-homocysteine + 3 H(+). Methylates ribosomal protein L11. This Actinobacillus pleuropneumoniae serotype 5b (strain L20) protein is Ribosomal protein L11 methyltransferase.